The chain runs to 196 residues: Probable GTP-binding protein EngB (196 aa).

The 173-residue stretch at 22–194 (DKKEIAFAGR…LKTIGEILGD (173 aa)) folds into the EngB-type G domain. Residues 30 to 37 (GRSNVGKS), 56 to 60 (GKTRS), 74 to 77 (DLPG), 141 to 144 (TKSD), and 173 to 175 (FSS) each bind GTP. Mg(2+) is bound by residues Ser37 and Thr58.

The protein belongs to the TRAFAC class TrmE-Era-EngA-EngB-Septin-like GTPase superfamily. EngB GTPase family. The cofactor is Mg(2+).

Necessary for normal cell division and for the maintenance of normal septation. In Petrotoga mobilis (strain DSM 10674 / SJ95), this protein is Probable GTP-binding protein EngB.